A 453-amino-acid chain; its full sequence is MDRRIFGLENEYGVTCTFRGQRRLSPDEVARYLFRRVVSWGRSSNVFLRNGARLYLDVGSHPEYATPECDNVTELVTHDKAGERILEGLLVDAERRLHEEGIAGDVYLFKNNTDSAGNSYGCHENYLVARHGEFSRLADILIPFLVTRQLLCGAGKVLQTPRGAVYCVSQRAEHIWEGVSSATTRSRPIINTRDEPHADAERYRRLHVIVGDSNMSETTMLLKVGATDLVLRMIEAGTVMRDLTLENPIRAIREVSHDITGRRKVRLASGREASALEVQREYYEKAVDFCERRGIRTGTVERVLELWGRTLDAIEAEDLDRIGTEIDWVMKYKLLERYRAKHNMTMSHPRVAQIDLAYHDIHRRRGLYYLLEKKGQAARVANDLKIFEGKSVPPQTTRARLRGDFIRRAQEQRRDFTVDWVHLKLNDQAQRTVLCKDPFRSVDDRVEKLIAGM.

Mg(2+) is bound at residue glutamate 9. Arginine 53 is an ATP binding site. Tyrosine 55 contacts Mg(2+). Catalysis depends on aspartate 57, which acts as the Proton acceptor. Glutamate 63 contributes to the Mg(2+) binding site. Residues threonine 66 and tryptophan 420 each coordinate ATP.

The protein belongs to the Pup ligase/Pup deamidase family. Pup-conjugating enzyme subfamily.

It catalyses the reaction ATP + [prokaryotic ubiquitin-like protein]-L-glutamate + [protein]-L-lysine = ADP + phosphate + N(6)-([prokaryotic ubiquitin-like protein]-gamma-L-glutamyl)-[protein]-L-lysine.. It functions in the pathway protein degradation; proteasomal Pup-dependent pathway. Its pathway is protein modification; protein pupylation. In terms of biological role, catalyzes the covalent attachment of the prokaryotic ubiquitin-like protein modifier Pup to the proteasomal substrate proteins, thereby targeting them for proteasomal degradation. This tagging system is termed pupylation. The ligation reaction involves the side-chain carboxylate of the C-terminal glutamate of Pup and the side-chain amino group of a substrate lysine. This Streptomyces coelicolor (strain ATCC BAA-471 / A3(2) / M145) protein is Pup--protein ligase.